The following is a 29-amino-acid chain: Galanin (29 aa).

Ala-29 is subject to Alanine amide.

This sequence belongs to the galanin family.

Its subcellular location is the secreted. Contracts smooth muscle of the gastrointestinal and genitourinary tract, regulates growth hormone release, modulates insulin release, and may be involved in the control of adrenal secretion. This chain is Galanin (GAL), found in Alligator mississippiensis (American alligator).